The primary structure comprises 150 residues: Large ribosomal subunit protein bL9 (150 aa).

This sequence belongs to the bacterial ribosomal protein bL9 family.

Its function is as follows. Binds to the 23S rRNA. The sequence is that of Large ribosomal subunit protein bL9 from Burkholderia vietnamiensis (strain G4 / LMG 22486) (Burkholderia cepacia (strain R1808)).